Here is a 358-residue protein sequence, read N- to C-terminus: MHAVTRPTLREAVARLAPGTGLRDGLERILRGRTGALIVLGHDENVEAICDGGFSLDVRYAATRLRELCKMDGAVVLSTDGSRIVRANVQLVPDPSIPTDESGTRHRSAERAAIQTGYPVISVSHSMNIVTVYVRGERHVLTDSATILSRANQAIATLERYKTRLDEVSRQLSRAEIEDFVTLRDVMTVVQRLELVRRIGLVIDYDVVELGTDGRQLRLQLDELLGGNDTARELIVRDYHANPEPPSTGQINATLDELDALSDGDLLDFTALAKVFGYPTTTEAQDSALSPRGYRAMAGIPRLQFAHADLLVRAFGTLQGLLAASAGDLQSVDGIGAMWARHVRDGLSQLAESTISDQ.

Residues 6-144 form the DAC domain; it reads RPTLREAVAR…RGERHVLTDS (139 aa). ATP is bound by residues G73, L91, and 104 to 108; that span reads TRHRS.

Belongs to the DisA family. In terms of assembly, homooctamer. The cofactor is Mg(2+).

It carries out the reaction 2 ATP = 3',3'-c-di-AMP + 2 diphosphate. Its function is as follows. Participates in a DNA-damage check-point. DisA forms globular foci that rapidly scan along the chromosomes searching for lesions. Functionally, also has diadenylate cyclase activity, catalyzing the condensation of 2 ATP molecules into cyclic di-AMP (c-di-AMP). c-di-AMP likely acts as a signaling molecule that may couple DNA integrity with a cellular process. This is DNA integrity scanning protein DisA from Mycobacterium bovis (strain ATCC BAA-935 / AF2122/97).